A 456-amino-acid chain; its full sequence is Exodeoxyribonuclease 7 large subunit (456 aa).

Belongs to the XseA family. As to quaternary structure, heterooligomer composed of large and small subunits.

Its subcellular location is the cytoplasm. The enzyme catalyses Exonucleolytic cleavage in either 5'- to 3'- or 3'- to 5'-direction to yield nucleoside 5'-phosphates.. Functionally, bidirectionally degrades single-stranded DNA into large acid-insoluble oligonucleotides, which are then degraded further into small acid-soluble oligonucleotides. The protein is Exodeoxyribonuclease 7 large subunit of Erwinia tasmaniensis (strain DSM 17950 / CFBP 7177 / CIP 109463 / NCPPB 4357 / Et1/99).